The following is a 190-amino-acid chain: Large ribosomal subunit protein bL25 (190 aa).

Belongs to the bacterial ribosomal protein bL25 family. CTC subfamily. In terms of assembly, part of the 50S ribosomal subunit; part of the 5S rRNA/L5/L18/L25 subcomplex. Contacts the 5S rRNA. Binds to the 5S rRNA independently of L5 and L18.

In terms of biological role, this is one of the proteins that binds to the 5S RNA in the ribosome where it forms part of the central protuberance. The protein is Large ribosomal subunit protein bL25 of Neisseria gonorrhoeae (strain ATCC 700825 / FA 1090).